A 122-amino-acid polypeptide reads, in one-letter code: Large ribosomal subunit protein uL14 (122 aa).

Belongs to the universal ribosomal protein uL14 family. As to quaternary structure, part of the 50S ribosomal subunit. Forms a cluster with proteins L3 and L19. In the 70S ribosome, L14 and L19 interact and together make contacts with the 16S rRNA in bridges B5 and B8.

Functionally, binds to 23S rRNA. Forms part of two intersubunit bridges in the 70S ribosome. The chain is Large ribosomal subunit protein uL14 from Micrococcus luteus (Micrococcus lysodeikticus).